We begin with the raw amino-acid sequence, 470 residues long: 1-aminocyclopropane-1-carboxylate synthase 5 (470 aa).

Glutamate 47 and tyrosine 85 together coordinate substrate. An N6-(pyridoxal phosphate)lysine modification is found at lysine 272. Serine 461 carries the post-translational modification Phosphoserine.

It belongs to the class-I pyridoxal-phosphate-dependent aminotransferase family. Homodimer and heterodimer. In vivo, the relevance of heterodimerization with other ACS enzymes is however unsure. Interacts (via its C-terminal region) with FEI1, FEI2, ETO1, EOL1 and EOL2. Interacts with GRF3. Pyridoxal 5'-phosphate is required as a cofactor. Post-translationally, may be processed at its C-terminus. In terms of processing, ubiquitinated. The interaction with ETO1 (and possibly EOL1 and EOL2) mediate its proteasome-dependent degradation. Its stability and degradation plays a central role in ethylene biosynthesis. Expressed in roots and siliques.

It carries out the reaction S-adenosyl-L-methionine = 1-aminocyclopropane-1-carboxylate + S-methyl-5'-thioadenosine + H(+). It participates in alkene biosynthesis; ethylene biosynthesis via S-adenosyl-L-methionine; ethylene from S-adenosyl-L-methionine: step 1/2. Its function is as follows. 1-aminocyclopropane-1-carboxylate synthase (ACS) enzymes catalyze the conversion of S-adenosyl-L-methionine (SAM) into 1-aminocyclopropane-1-carboxylate (ACC), a direct precursor of ethylene. This chain is 1-aminocyclopropane-1-carboxylate synthase 5 (ACS5), found in Arabidopsis thaliana (Mouse-ear cress).